The chain runs to 275 residues: MLTLNVIKAIILGIVEGFTEWLPISSTGHLVLVGSVLKMGESKAFMDMFNYVIQFGAILAVVVLYFHKLNPFSPQKNQLEQKQTWTLWFKVILAVIPSVIIGFPLNDWMDEHLMQNWVVASMLILYGILFIVIENRNKQRTPKFADLNTLPWLTAFWIGCFQALSIIPGTSRSGATILGAILIGTSRFVGAEFSFFMAIPTMIGVSILKIGKFFYQGNTFTGDQSIILLVGMVVSFIISIISIKFLMGYIKKNDFKVFGWYRIILGVLVLGAMFL.

Helical transmembrane passes span 4 to 24 (LNVIKAIILGIVEGFTEWLPI), 44 to 64 (AFMDMFNYVIQFGAILAVVVL), 85 to 105 (WTLWFKVILAVIPSVIIGFPL), 113 to 133 (LMQNWVVASMLILYGILFIVI), 149 to 169 (TLPWLTAFWIGCFQALSIIPG), 188 to 208 (FVGAEFSFFMAIPTMIGVSIL), 226 to 246 (IILLVGMVVSFIISIISIKFL), and 255 to 275 (FKVFGWYRIILGVLVLGAMFL).

The protein belongs to the UppP family.

Its subcellular location is the cell membrane. It carries out the reaction di-trans,octa-cis-undecaprenyl diphosphate + H2O = di-trans,octa-cis-undecaprenyl phosphate + phosphate + H(+). Catalyzes the dephosphorylation of undecaprenyl diphosphate (UPP). Confers resistance to bacitracin. The polypeptide is Undecaprenyl-diphosphatase (Latilactobacillus sakei subsp. sakei (strain 23K) (Lactobacillus sakei subsp. sakei)).